The chain runs to 412 residues: Serine hydroxymethyltransferase (412 aa).

(6S)-5,6,7,8-tetrahydrofolate contacts are provided by residues leucine 117 and 121 to 123 (GHL). Lysine 226 carries the post-translational modification N6-(pyridoxal phosphate)lysine.

Belongs to the SHMT family. As to quaternary structure, homodimer. It depends on pyridoxal 5'-phosphate as a cofactor.

The protein resides in the cytoplasm. The enzyme catalyses (6R)-5,10-methylene-5,6,7,8-tetrahydrofolate + glycine + H2O = (6S)-5,6,7,8-tetrahydrofolate + L-serine. It participates in one-carbon metabolism; tetrahydrofolate interconversion. The protein operates within amino-acid biosynthesis; glycine biosynthesis; glycine from L-serine: step 1/1. In terms of biological role, catalyzes the reversible interconversion of serine and glycine with tetrahydrofolate (THF) serving as the one-carbon carrier. This reaction serves as the major source of one-carbon groups required for the biosynthesis of purines, thymidylate, methionine, and other important biomolecules. Also exhibits THF-independent aldolase activity toward beta-hydroxyamino acids, producing glycine and aldehydes, via a retro-aldol mechanism. This Staphylococcus saprophyticus subsp. saprophyticus (strain ATCC 15305 / DSM 20229 / NCIMB 8711 / NCTC 7292 / S-41) protein is Serine hydroxymethyltransferase.